The following is a 511-amino-acid chain: MEKFEGYSKKHKFRHQYFVYPLLFQEYIYAFAHDYGLKGSESVEIISCNNKKFSSLLVKRLIIRMYQQNFWINSVNHPNQDRLLDYNNYFYSEFYSQILSEGFAIVVEIPFSLRELSCSKEKEIPKFQNLRSIHSIFPFLEDKFLHLDYLSHIEIPYPIHLEILVQLLQYRLQDVPSLHFLRFFLNYYSNWNSLITSMKSIFLLKKENKRLFRFLYNSYVSEYEFFLLFLRKQSSRLPLTSSGTFLERIHFCTKMEHFGVRYPGFFRKTIWFFMDPLMHYVRYQGKAILASKGARFLRKKWKCYLVNFWQYSFSFWIQPRRIQLNKLANSCFDFLGYLSSVPQSPLLVRNQMLENSFLITTRIKKFDTIAPAISLIGSLSKAQFCTGSGHPISKPIWTDLSDWDILDRFGRICRNLFHYHSGSSKKQTLYRVKYILRLSCARTLARKHKSTVRTFMQRLGSVFLEEFFTEEEQVFSLMFTKTTHFSFRGSHSERIWYFDILRINDLVKPFN.

It belongs to the intron maturase 2 family. MatK subfamily.

The protein resides in the plastid. It is found in the chloroplast. Its function is as follows. Usually encoded in the trnK tRNA gene intron. Probably assists in splicing its own and other chloroplast group II introns. This is Maturase K from Nardus stricta (Mat-grass).